The sequence spans 480 residues: Carboxy-terminal processing protease CtpB (480 aa).

The N-terminal stretch at 1 to 23 (MNQKIMAVIAAGSMLFGGAGVYA) is a signal peptide. The PDZ domain maps to 92-182 (SVYMDKQTAK…SSVSMKIQRP (91 aa)). Residues 113 to 116 (GIGA) form a peptide binding region. The Nucleophile role is filled by Ser-309. Residues Lys-334 and Gln-338 each act as charge relay system in the active site.

Belongs to the peptidase S41A family. Homodimer. Post-translationally, is cleaved by SpoIVB in vitro and in vivo but this cleavage does not appear to be necessary for CtpB activation. CtpB can also cleave itself in vivo.

The protein localises to the forespore intermembrane space. It catalyses the reaction The enzyme shows specific recognition of a C-terminal tripeptide, Xaa-Yaa-Zaa, in which Xaa is preferably Ala or Leu, Yaa is preferably Ala or Tyr, and Zaa is preferably Ala, but then cleaves at a variable distance from the C-terminus. A typical cleavage is -Ala-Ala-|-Arg-Ala-Ala-Lys-Glu-Asn-Tyr-Ala-Leu-Ala-Ala.. Its activity is regulated as follows. Activated by peptide binding to the PDZ domain. Involved in the signal transduction pathway leading to the proteolytic activation of the mother cell transcription factor pro-sigma-K during sporulation. The signaling serine protease CtpB triggers pro-sigma-K processing by cleaving the pre-processed regulatory protein SpoIVFA and is necessary for the proper timing of sigma-K activation. In Bacillus subtilis (strain 168), this protein is Carboxy-terminal processing protease CtpB (ctpB).